Here is an 89-residue protein sequence, read N- to C-terminus: MPLDAAVKKSIMAEYATSEGDTGSPEVQVAMLTQRIRDLTEHLKTHQHDHHSRRGLLLLVGQRRNLLKYMAKKDINRYRSIIERLGIRR.

Belongs to the universal ribosomal protein uS15 family. As to quaternary structure, part of the 30S ribosomal subunit. Forms a bridge to the 50S subunit in the 70S ribosome, contacting the 23S rRNA.

One of the primary rRNA binding proteins, it binds directly to 16S rRNA where it helps nucleate assembly of the platform of the 30S subunit by binding and bridging several RNA helices of the 16S rRNA. Its function is as follows. Forms an intersubunit bridge (bridge B4) with the 23S rRNA of the 50S subunit in the ribosome. This is Small ribosomal subunit protein uS15 from Kineococcus radiotolerans (strain ATCC BAA-149 / DSM 14245 / SRS30216).